Reading from the N-terminus, the 272-residue chain is Putative pyruvate, phosphate dikinase regulatory protein (272 aa).

An ADP-binding site is contributed by 149–156 (GVSRTSKT).

This sequence belongs to the pyruvate, phosphate/water dikinase regulatory protein family. PDRP subfamily.

The enzyme catalyses N(tele)-phospho-L-histidyl/L-threonyl-[pyruvate, phosphate dikinase] + ADP = N(tele)-phospho-L-histidyl/O-phospho-L-threonyl-[pyruvate, phosphate dikinase] + AMP + H(+). It carries out the reaction N(tele)-phospho-L-histidyl/O-phospho-L-threonyl-[pyruvate, phosphate dikinase] + phosphate + H(+) = N(tele)-phospho-L-histidyl/L-threonyl-[pyruvate, phosphate dikinase] + diphosphate. In terms of biological role, bifunctional serine/threonine kinase and phosphorylase involved in the regulation of the pyruvate, phosphate dikinase (PPDK) by catalyzing its phosphorylation/dephosphorylation. In Lactiplantibacillus plantarum (strain ATCC BAA-793 / NCIMB 8826 / WCFS1) (Lactobacillus plantarum), this protein is Putative pyruvate, phosphate dikinase regulatory protein.